Reading from the N-terminus, the 347-residue chain is Holliday junction branch migration complex subunit RuvB (347 aa).

Residues 1-182 (MSAQNPVLTP…FGIPVRLSFY (182 aa)) form a large ATPase domain (RuvB-L) region. ATP is bound by residues Leu-21, Arg-22, Gly-63, Lys-66, Thr-67, Thr-68, 129–131 (EDF), Arg-172, Tyr-182, and Arg-219. Thr-67 is a binding site for Mg(2+). Positions 183-253 (TVEELELIVR…IADEALTRLL (71 aa)) are small ATPAse domain (RuvB-S). A head domain (RuvB-H) region spans residues 256 to 347 (NMGLDQLDTR…QFRLTLEDDD (92 aa)). Positions 292, 311, and 316 each coordinate DNA.

It belongs to the RuvB family. As to quaternary structure, homohexamer. Forms an RuvA(8)-RuvB(12)-Holliday junction (HJ) complex. HJ DNA is sandwiched between 2 RuvA tetramers; dsDNA enters through RuvA and exits via RuvB. An RuvB hexamer assembles on each DNA strand where it exits the tetramer. Each RuvB hexamer is contacted by two RuvA subunits (via domain III) on 2 adjacent RuvB subunits; this complex drives branch migration. In the full resolvosome a probable DNA-RuvA(4)-RuvB(12)-RuvC(2) complex forms which resolves the HJ.

The protein resides in the cytoplasm. It catalyses the reaction ATP + H2O = ADP + phosphate + H(+). The RuvA-RuvB-RuvC complex processes Holliday junction (HJ) DNA during genetic recombination and DNA repair, while the RuvA-RuvB complex plays an important role in the rescue of blocked DNA replication forks via replication fork reversal (RFR). RuvA specifically binds to HJ cruciform DNA, conferring on it an open structure. The RuvB hexamer acts as an ATP-dependent pump, pulling dsDNA into and through the RuvAB complex. RuvB forms 2 homohexamers on either side of HJ DNA bound by 1 or 2 RuvA tetramers; 4 subunits per hexamer contact DNA at a time. Coordinated motions by a converter formed by DNA-disengaged RuvB subunits stimulates ATP hydrolysis and nucleotide exchange. Immobilization of the converter enables RuvB to convert the ATP-contained energy into a lever motion, pulling 2 nucleotides of DNA out of the RuvA tetramer per ATP hydrolyzed, thus driving DNA branch migration. The RuvB motors rotate together with the DNA substrate, which together with the progressing nucleotide cycle form the mechanistic basis for DNA recombination by continuous HJ branch migration. Branch migration allows RuvC to scan DNA until it finds its consensus sequence, where it cleaves and resolves cruciform DNA. This chain is Holliday junction branch migration complex subunit RuvB, found in Allorhizobium ampelinum (strain ATCC BAA-846 / DSM 112012 / S4) (Agrobacterium vitis (strain S4)).